The following is a 67-amino-acid chain: Large ribosomal subunit protein bL32 (67 aa).

The span at 1–19 (MAVPKRKMSRSNTRSRRSQ) shows a compositional bias: basic residues. Residues 1 to 22 (MAVPKRKMSRSNTRSRRSQWKA) are disordered.

This sequence belongs to the bacterial ribosomal protein bL32 family.

The protein is Large ribosomal subunit protein bL32 of Kineococcus radiotolerans (strain ATCC BAA-149 / DSM 14245 / SRS30216).